A 540-amino-acid polypeptide reads, in one-letter code: MAAGGSAPEPRVLVCLGALLAGWVAVGLEAVVIGEVHENVTLHCGNISGLRGQVTWYRNNSEPVFLLSSNSSLRPAEPRFSLVDATSLHIESLSLGDEGIYTCQEILNVTQWFQVWLQVASGPYQIEVHIVATGTLPNGTLYAARGSQVDFSCNSSSRPPPVVEWWFQALNSSSESFGHNLTVNFFSLLLISPNLQGNYTCLALNQLSKRHRKVTTELLVYYPPPSAPQCWAQMASGSFMLQLTCRWDGGYPDPDFLWIEEPGGVIVGKSKLGVEMLSESQLSDGKKFKCVTSHIVGPESGASCMVQIRGPSLLSEPMKTCFTGGNVTLTCQVSGAYPPAKILWLRNLTQPEVIIQPSSRHLITQDGQNSTLTIHNCSQDLDEGYYICRADSPVGVREMEIWLSVKEPLNIGGIVGTIVSLLLLGLAIISGLLLHYSPVFCWKVGNTSRGQNMDDVMVLVDSEEEEEEEEEEEEDAAVGEQEGAREREELPKEIPKQDHIHRVTALVNGNIEQMGNGFQDLQDDSSEEQSDIVQEEDRPV.

The first 30 residues, Met1–Ala30, serve as a signal peptide directing secretion. Ig-like C2-type domains lie at Val31–Val119, Pro123–Thr215, Pro223–Arg309, and Pro311–Ser404. Residues Val31–Gly413 lie on the Extracellular side of the membrane. Asn39, Asn46, Asn70, Asn108, Asn138, Asn171, Asn180, and Asn198 each carry an N-linked (GlcNAc...) asparagine glycan. An intrachain disulfide couples Cys44 to Cys103. 2 disulfide bridges follow: Cys153–Cys201 and Cys245–Cys290. Asn326 is a glycosylation site (N-linked (GlcNAc...) asparagine). Cys331 and Cys388 form a disulfide bridge. Residues Ile414–Leu434 form a helical membrane-spanning segment. The Cytoplasmic portion of the chain corresponds to His435 to Val540. Residues Asp461–Ala477 show a composition bias toward acidic residues. Disordered regions lie at residues Asp461 to Ile500 and Gln513 to Val540. Over residues Glu482–Ile500 the composition is skewed to basic and acidic residues. The span at Leu521 to Gln534 shows a compositional bias: acidic residues.

Its subcellular location is the membrane. This Homo sapiens (Human) protein is V-set and immunoglobulin domain-containing protein 10 (VSIG10).